Reading from the N-terminus, the 79-residue chain is Acyl carrier protein (79 aa).

Positions 2-77 (SDIEERVKKI…SAIDYVNAHK (76 aa)) constitute a Carrier domain. Position 37 is an O-(pantetheine 4'-phosphoryl)serine (serine 37).

Belongs to the acyl carrier protein (ACP) family. In terms of processing, 4'-phosphopantetheine is transferred from CoA to a specific serine of apo-ACP by AcpS. This modification is essential for activity because fatty acids are bound in thioester linkage to the sulfhydryl of the prosthetic group.

It is found in the cytoplasm. The protein operates within lipid metabolism; fatty acid biosynthesis. In terms of biological role, carrier of the growing fatty acid chain in fatty acid biosynthesis. This Pseudoalteromonas atlantica (strain T6c / ATCC BAA-1087) protein is Acyl carrier protein.